Consider the following 380-residue polypeptide: Chorismate synthase (380 aa).

Arg-47 is a binding site for NADP(+). FMN is bound by residues 124 to 126 (RSS), Gly-288, 303 to 307 (KPTST), and Arg-329.

Belongs to the chorismate synthase family. Homotetramer. FMNH2 serves as cofactor.

The catalysed reaction is 5-O-(1-carboxyvinyl)-3-phosphoshikimate = chorismate + phosphate. It functions in the pathway metabolic intermediate biosynthesis; chorismate biosynthesis; chorismate from D-erythrose 4-phosphate and phosphoenolpyruvate: step 7/7. Its function is as follows. Catalyzes the anti-1,4-elimination of the C-3 phosphate and the C-6 proR hydrogen from 5-enolpyruvylshikimate-3-phosphate (EPSP) to yield chorismate, which is the branch point compound that serves as the starting substrate for the three terminal pathways of aromatic amino acid biosynthesis. This reaction introduces a second double bond into the aromatic ring system. The sequence is that of Chorismate synthase from Leptospira borgpetersenii serovar Hardjo-bovis (strain JB197).